Reading from the N-terminus, the 78-residue chain is Large ribosomal subunit protein bL28 (78 aa).

The interval 1–23 (MSRVCQVTGKRPITGNNVSHSKR) is disordered.

This sequence belongs to the bacterial ribosomal protein bL28 family.

The chain is Large ribosomal subunit protein bL28 from Marinomonas sp. (strain MWYL1).